We begin with the raw amino-acid sequence, 233 residues long: MGQKVNPIGLRLGINRNWESRWFPTKANLVENIGEDYKIRAFLKRKLYYAGISQILVERTAKKLRVTVVAARPGIIIGKKGSDVDNLRKELQDLIGKDVNINIKEERKAGASAQLAAESVATQLEKRIAFRRAMKKVIQGAQKAGAKGIKVSVSGRLGGAEMARTEWYLEGRVPLHTLRAKIDYGFAEARTTYGNIGVKVWIFKGEVLHKGMQPEKTEESAPAKKPRRTRRGK.

One can recognise a KH type-2 domain in the interval 39–107 (IRAFLKRKLY…DVNINIKEER (69 aa)). Basic and acidic residues predominate over residues 212-222 (MQPEKTEESAP). The interval 212–233 (MQPEKTEESAPAKKPRRTRRGK) is disordered. The span at 224–233 (KKPRRTRRGK) shows a compositional bias: basic residues.

The protein belongs to the universal ribosomal protein uS3 family. In terms of assembly, part of the 30S ribosomal subunit. Forms a tight complex with proteins S10 and S14.

Functionally, binds the lower part of the 30S subunit head. Binds mRNA in the 70S ribosome, positioning it for translation. This Campylobacter jejuni subsp. jejuni serotype O:6 (strain 81116 / NCTC 11828) protein is Small ribosomal subunit protein uS3.